Reading from the N-terminus, the 148-residue chain is Inner membrane protein YccF (148 aa).

Residues 1-14 lie on the Periplasmic side of the membrane; that stretch reads MRTVLNILNFVLGG. The chain crosses the membrane as a helical span at residues 15–37; sequence FATTLGWLLATLVSIVLIFTLPL. At 38 to 76 the chain is on the cytoplasmic side; the sequence is TRSCWEITKLSLVPYGNEAIHVDELNPAGKNVLLNTGGT. A helical membrane pass occupies residues 77-99; sequence VLNIFWLIFFGWWLCLMHIATGI. Residues 100–102 are Periplasmic-facing; sequence AQC. Residues 103–125 traverse the membrane as a helical segment; that stretch reads ISIIGIPVGIANFKIAAIALWPV. Residues 126–148 are Cytoplasmic-facing; sequence GRRVVSVETAQAAREANARRRFE.

Its subcellular location is the cell inner membrane. The chain is Inner membrane protein YccF (yccF) from Escherichia coli (strain K12).